Reading from the N-terminus, the 419-residue chain is Pyrophosphate--fructose 6-phosphate 1-phosphotransferase (419 aa).

Residue Gly-13 participates in diphosphate binding. Residues 142 to 144 (TVD), 190 to 192 (MGR), Glu-247, and 297 to 300 (YLQR) each bind substrate. The active-site Proton acceptor is the Asp-144.

The protein belongs to the phosphofructokinase type A (PFKA) family. PPi-dependent PFK group II subfamily. Clade 'B2' sub-subfamily. Homodimer. The cofactor is Mg(2+).

It is found in the cytoplasm. The catalysed reaction is beta-D-fructose 6-phosphate + diphosphate = beta-D-fructose 1,6-bisphosphate + phosphate + H(+). It functions in the pathway carbohydrate degradation; glycolysis; D-glyceraldehyde 3-phosphate and glycerone phosphate from D-glucose: step 3/4. Non-allosteric. Catalyzes the phosphorylation of D-fructose 6-phosphate, the first committing step of glycolysis. Uses inorganic phosphate (PPi) as phosphoryl donor instead of ATP like common ATP-dependent phosphofructokinases (ATP-PFKs), which renders the reaction reversible, and can thus function both in glycolysis and gluconeogenesis. Consistently, PPi-PFK can replace the enzymes of both the forward (ATP-PFK) and reverse (fructose-bisphosphatase (FBPase)) reactions. The chain is Pyrophosphate--fructose 6-phosphate 1-phosphotransferase from Halomonas elongata (strain ATCC 33173 / DSM 2581 / NBRC 15536 / NCIMB 2198 / 1H9).